A 445-amino-acid chain; its full sequence is Exodeoxyribonuclease 7 large subunit (445 aa).

Belongs to the XseA family. Heterooligomer composed of large and small subunits.

The protein localises to the cytoplasm. The enzyme catalyses Exonucleolytic cleavage in either 5'- to 3'- or 3'- to 5'-direction to yield nucleoside 5'-phosphates.. Bidirectionally degrades single-stranded DNA into large acid-insoluble oligonucleotides, which are then degraded further into small acid-soluble oligonucleotides. The sequence is that of Exodeoxyribonuclease 7 large subunit from Xanthomonas euvesicatoria pv. vesicatoria (strain 85-10) (Xanthomonas campestris pv. vesicatoria).